The sequence spans 59 residues: Light-harvesting protein B-800-850 alpha chain A (59 aa).

At 1–11 the chain is on the cytoplasmic side; sequence MNQARIWTVVK. Residues 12 to 35 form a helical membrane-spanning segment; sequence PTVGLPLLLGSVTVIAILVHFAVL. His-31 contacts a bacteriochlorophyll. The Periplasmic segment spans residues 36–59; it reads SHTTWFSKYWNGKAAAIESSVNVG.

It belongs to the antenna complex alpha subunit family. As to quaternary structure, the core complex is formed by different alpha and beta chains, binding bacteriochlorophyll molecules, and arranged most probably in tetrameric structures disposed around the reaction center. The non-pigmented gamma chains may constitute additional components.

It localises to the cell inner membrane. In terms of biological role, antenna complexes are light-harvesting systems, which transfer the excitation energy to the reaction centers. In Rhodopseudomonas palustris (strain ATCC BAA-98 / CGA009), this protein is Light-harvesting protein B-800-850 alpha chain A (pucAA).